Consider the following 631-residue polypeptide: 1-deoxy-D-xylulose-5-phosphate synthase (631 aa).

Thiamine diphosphate is bound by residues His87 and 128-130 (GHS). Asp159 lines the Mg(2+) pocket. Thiamine diphosphate-binding positions include 160-161 (GA), Asn188, Phe295, and Glu377. Mg(2+) is bound at residue Asn188.

This sequence belongs to the transketolase family. DXPS subfamily. As to quaternary structure, homodimer. Mg(2+) serves as cofactor. Requires thiamine diphosphate as cofactor.

It catalyses the reaction D-glyceraldehyde 3-phosphate + pyruvate + H(+) = 1-deoxy-D-xylulose 5-phosphate + CO2. Its pathway is metabolic intermediate biosynthesis; 1-deoxy-D-xylulose 5-phosphate biosynthesis; 1-deoxy-D-xylulose 5-phosphate from D-glyceraldehyde 3-phosphate and pyruvate: step 1/1. Catalyzes the acyloin condensation reaction between C atoms 2 and 3 of pyruvate and glyceraldehyde 3-phosphate to yield 1-deoxy-D-xylulose-5-phosphate (DXP). The sequence is that of 1-deoxy-D-xylulose-5-phosphate synthase from Pseudomonas putida (strain ATCC 47054 / DSM 6125 / CFBP 8728 / NCIMB 11950 / KT2440).